Reading from the N-terminus, the 438-residue chain is Adenylyltransferase and sulfurtransferase UBA4 (438 aa).

ATP contacts are provided by residues glycine 81, aspartate 102, 109–113 (SNLHR), lysine 126, and 170–171 (DH). 2 residues coordinate Zn(2+): cysteine 212 and cysteine 215. Cysteine 229 serves as the catalytic Glycyl thioester intermediate; for adenylyltransferase activity. Cysteine 290 and cysteine 293 together coordinate Zn(2+). Residues 340–436 (NKKKHILIDV…WSDDVDSKIP (97 aa)) enclose the Rhodanese domain. Cysteine 396 serves as the catalytic Cysteine persulfide intermediate; for sulfurtransferase activity.

It in the N-terminal section; belongs to the HesA/MoeB/ThiF family. UBA4 subfamily. Zn(2+) serves as cofactor.

It is found in the cytoplasm. Its subcellular location is the cytosol. Its pathway is tRNA modification; 5-methoxycarbonylmethyl-2-thiouridine-tRNA biosynthesis. In terms of biological role, plays a central role in 2-thiolation of mcm(5)S(2)U at tRNA wobble positions of cytosolic tRNA(Lys), tRNA(Glu) and tRNA(Gln). Acts by mediating the C-terminal thiocarboxylation of sulfur carrier URM1. Its N-terminus first activates URM1 as acyl-adenylate (-COAMP), then the persulfide sulfur on the catalytic cysteine is transferred to URM1 to form thiocarboxylation (-COSH) of its C-terminus. The reaction probably involves hydrogen sulfide that is generated from the persulfide intermediate and that acts as a nucleophile towards URM1. Subsequently, a transient disulfide bond is formed. Does not use thiosulfate as sulfur donor; NFS1 probably acting as a sulfur donor for thiocarboxylation reactions. Prior mcm(5) tRNA modification by the elongator complex is required for 2-thiolation. May also be involved in protein urmylation. The protein is Adenylyltransferase and sulfurtransferase UBA4 of Candida albicans (strain SC5314 / ATCC MYA-2876) (Yeast).